Reading from the N-terminus, the 522-residue chain is Putative aminopeptidase W07G4.4 (522 aa).

Zn(2+) is bound by residues Lys-271 and Asp-276. Lys-283 is an active-site residue. Residues Asp-294, Asp-354, and Glu-356 each coordinate Zn(2+). Arg-358 is an active-site residue.

It belongs to the peptidase M17 family. Requires Zn(2+) as cofactor.

This Caenorhabditis elegans protein is Putative aminopeptidase W07G4.4 (lap-2).